The sequence spans 200 residues: Small ribosomal subunit protein uS4 (200 aa).

The disordered stretch occupies residues 22 to 42 (TGKELQKRPYPPGQHGPGQRR). The region spanning 92 to 152 (SRLDNLVYRL…EKSRNLQVIK (61 aa)) is the S4 RNA-binding domain.

Belongs to the universal ribosomal protein uS4 family. In terms of assembly, part of the 30S ribosomal subunit. Contacts protein S5. The interaction surface between S4 and S5 is involved in control of translational fidelity.

In terms of biological role, one of the primary rRNA binding proteins, it binds directly to 16S rRNA where it nucleates assembly of the body of the 30S subunit. Functionally, with S5 and S12 plays an important role in translational accuracy. In Geobacillus kaustophilus (strain HTA426), this protein is Small ribosomal subunit protein uS4.